The sequence spans 83 residues: Small ribosomal subunit protein bS16 (83 aa).

Belongs to the bacterial ribosomal protein bS16 family.

The sequence is that of Small ribosomal subunit protein bS16 from Pseudoalteromonas atlantica (strain T6c / ATCC BAA-1087).